The primary structure comprises 258 residues: Acetylglutamate kinase (258 aa).

Residues 44–45 (GG), R66, and N158 each bind substrate. ATP-binding positions include 181 to 186 (DVSGIL) and 209 to 211 (IIT).

The protein belongs to the acetylglutamate kinase family. ArgB subfamily. In terms of assembly, homodimer.

It localises to the cytoplasm. It catalyses the reaction N-acetyl-L-glutamate + ATP = N-acetyl-L-glutamyl 5-phosphate + ADP. The protein operates within amino-acid biosynthesis; L-arginine biosynthesis; N(2)-acetyl-L-ornithine from L-glutamate: step 2/4. Functionally, catalyzes the ATP-dependent phosphorylation of N-acetyl-L-glutamate. In Shigella sonnei (strain Ss046), this protein is Acetylglutamate kinase.